Consider the following 311-residue polypeptide: Glutaminase (311 aa).

Residues Ser-66, Asn-116, Glu-162, Asn-169, Tyr-193, Tyr-245, and Val-263 each coordinate substrate.

The protein belongs to the glutaminase family. In terms of assembly, homotetramer.

It catalyses the reaction L-glutamine + H2O = L-glutamate + NH4(+). The protein is Glutaminase of Rhodopseudomonas palustris (strain TIE-1).